Here is a 408-residue protein sequence, read N- to C-terminus: Glutathione-independent formaldehyde dehydrogenase (408 aa).

A Zn(2+)-binding site is contributed by Cys-61. Residues Gly-62, Ser-63, and His-66 each contribute to the NAD(+) site. Zn(2+) contacts are provided by His-82, Cys-112, Cys-115, Cys-118, Cys-126, and Asp-184. NAD(+) is bound by residues Val-212, Asp-232, Arg-237, Val-277, His-284, Pro-311, Leu-313, Gly-348, and Thr-350.

The protein belongs to the zinc-containing alcohol dehydrogenase family. Zn(2+) is required as a cofactor.

It catalyses the reaction formaldehyde + NAD(+) + H2O = formate + NADH + 2 H(+). With respect to regulation, activity is not inhibited by EDTA, which is probably not sufficient to displace the bound metal. Functionally, dehydrogenase that catalyzes the NAD(+)-dependent oxidation of formaldehyde. Exhibits lower activity with acetaldehyde (about 10-fold lower than for formaldehyde), but cannot use methanol, ethanol, 1-butanol, glyoxal or formic acid. Is involved in formaldehyde detoxification. The polypeptide is Glutathione-independent formaldehyde dehydrogenase (Bacillus subtilis (strain 168)).